The sequence spans 418 residues: Glutamyl-tRNA reductase (418 aa).

Residues 49-52 (TCNR), S108, 113-115 (EPQ), and Q119 each bind substrate. Residue C50 is the Nucleophile of the active site. 188–193 (GAGETI) lines the NADP(+) pocket.

The protein belongs to the glutamyl-tRNA reductase family. Homodimer.

The catalysed reaction is (S)-4-amino-5-oxopentanoate + tRNA(Glu) + NADP(+) = L-glutamyl-tRNA(Glu) + NADPH + H(+). Its pathway is porphyrin-containing compound metabolism; protoporphyrin-IX biosynthesis; 5-aminolevulinate from L-glutamyl-tRNA(Glu): step 1/2. Its function is as follows. Catalyzes the NADPH-dependent reduction of glutamyl-tRNA(Glu) to glutamate 1-semialdehyde (GSA). In Aliivibrio fischeri (strain ATCC 700601 / ES114) (Vibrio fischeri), this protein is Glutamyl-tRNA reductase.